The chain runs to 464 residues: Dolichyl-diphosphooligosaccharide--protein glycosyltransferase subunit 1B (464 aa).

Residues 1-24 (MAARIGIFSVFVAVLLSISAFSSA) form the signal peptide. Residues 25–436 (QDLQIVNAER…TFKPIYMLAE (412 aa)) are Lumenal-facing. Asparagine 106 and asparagine 298 each carry an N-linked (GlcNAc...) asparagine glycan. Residue lysine 310 forms a Glycyl lysine isopeptide (Lys-Gly) (interchain with G-Cter in ubiquitin) linkage. Residue asparagine 352 is glycosylated (N-linked (GlcNAc...) asparagine). The chain crosses the membrane as a helical span at residues 437–457 (PFMLVSAFFLVFVASLAYVHI). Residues 458–464 (DLNIVRK) are Cytoplasmic-facing.

This sequence belongs to the OST1 family. Component of the oligosaccharyltransferase (OST) complex.

Its subcellular location is the endoplasmic reticulum membrane. It functions in the pathway protein modification; protein glycosylation. Functionally, subunit of the oligosaccharyl transferase (OST) complex that catalyzes the initial transfer of a defined glycan (Glc(3)Man(9)GlcNAc(2) in eukaryotes) from the lipid carrier dolichol-pyrophosphate to an asparagine residue within an Asn-X-Ser/Thr consensus motif in nascent polypeptide chains, the first step in protein N-glycosylation. N-glycosylation occurs cotranslationally and the complex associates with the Sec61 complex at the channel-forming translocon complex that mediates protein translocation across the endoplasmic reticulum (ER). All subunits are required for a maximal enzyme activity. The protein is Dolichyl-diphosphooligosaccharide--protein glycosyltransferase subunit 1B (OST1B) of Arabidopsis thaliana (Mouse-ear cress).